The chain runs to 353 residues: 11-beta-hydroxysteroid dehydrogenase B (353 aa).

A helical; Signal-anchor for type II membrane protein transmembrane segment spans residues L10–P30. Residues P13–A26 carry the Proline-knob motif. Residues G54–R80 and D105 contribute to the NADP(+) site. S184 provides a ligand contact to substrate. Y197 functions as the Proton acceptor in the catalytic mechanism. Residues Y197 to K201 and K201 each bind NADP(+).

This sequence belongs to the short-chain dehydrogenases/reductases (SDR) family. In terms of tissue distribution, expressed in seeds (at protein level).

The protein resides in the lipid droplet. The protein localises to the membrane. The enzyme catalyses an 11beta-hydroxysteroid + NADP(+) = an 11-oxosteroid + NADPH + H(+). Its function is as follows. Has dehydrogenase activity against 11 beta-hydroxysteroid and 17 beta-hydroxysteroid. May be involved in signal transduction regulated by various sterols. In Arachis hypogaea (Peanut), this protein is 11-beta-hydroxysteroid dehydrogenase B.